The following is a 627-amino-acid chain: Meiosis-specific transcription factor NDT80 (627 aa).

Residues 28–335 (EEDTPVILTQ…RSPSNYASSQ (308 aa)) constitute a DNA-binding region (NDT80). A disordered region spans residues 324 to 410 (RGRSPSNYAS…MEASKENEDP (87 aa)). Polar residues-rich tracts occupy residues 327-351 (SPSN…SQNS) and 386-401 (SGAS…STPM).

As to quaternary structure, binds to DNA as a monomer. In terms of processing, phosphorylated by pachytene checkpoint kinase IME2, but also phosphorylated in an IME2-independent manner. Phosphorylation probably eliminates SUM1-mediated repression and is also required for full transcriptional activation activity. Phosphorylation of the DNA-binding domain by IME2 does not alter DNA binding affinity.

The protein resides in the nucleus. Its function is as follows. Transcription factor required for successful completion of meiosis and spore formation. Gets activated after completion of meiotic recombination at the end of prophase I. Recognizes and binds to the middle sporulation element (MSE) 5'-C[AG]CAAA[AT]-3' in the promoter region of stage-specific genes that are required for progression through meiosis and sporulation. Competes for binding to MSE with the transcriptional repressor SUM1, which represses middle sporulation-specific genes during mitosis and early sporulation. This is Meiosis-specific transcription factor NDT80 (NDT80) from Saccharomyces cerevisiae (strain ATCC 204508 / S288c) (Baker's yeast).